Consider the following 433-residue polypeptide: Trigger factor (433 aa).

A PPIase FKBP-type domain is found at 161–246 (EDRVVIDFVG…LKKVENIVLP (86 aa)).

The protein belongs to the FKBP-type PPIase family. Tig subfamily.

It is found in the cytoplasm. It catalyses the reaction [protein]-peptidylproline (omega=180) = [protein]-peptidylproline (omega=0). Functionally, involved in protein export. Acts as a chaperone by maintaining the newly synthesized protein in an open conformation. Functions as a peptidyl-prolyl cis-trans isomerase. In Actinobacillus pleuropneumoniae serotype 5b (strain L20), this protein is Trigger factor.